The chain runs to 199 residues: Superoxide dismutase [Mn/Fe] (199 aa).

His27, His81, Asp161, and His165 together coordinate Fe(3+). His27, His81, Asp161, and His165 together coordinate Mn(2+).

The protein belongs to the iron/manganese superoxide dismutase family. As to quaternary structure, homodimer. Mn(2+) serves as cofactor. Fe(3+) is required as a cofactor.

It carries out the reaction 2 superoxide + 2 H(+) = H2O2 + O2. Functionally, destroys superoxide anion radicals which are normally produced within the cells and which are toxic to biological systems. Catalyzes the dismutation of superoxide anion radicals into O2 and H2O2 by successive reduction and oxidation of the transition metal ion at the active site. The chain is Superoxide dismutase [Mn/Fe] (sodA) from Staphylococcus saprophyticus subsp. saprophyticus (strain ATCC 15305 / DSM 20229 / NCIMB 8711 / NCTC 7292 / S-41).